The following is a 370-amino-acid chain: Acyl-CoA:lysophosphatidylglycerol acyltransferase 1 (370 aa).

Residues 22–42 (FAFMVVNNLVAIPSYICYVII) traverse the membrane as a helical segment. An HXXXXD motif motif is present at residues 101-106 (HQATGD). A helical membrane pass occupies residues 342 to 362 (LWIFLIQSFAFLSGYMWYNII).

The protein belongs to the 1-acyl-sn-glycerol-3-phosphate acyltransferase family. In terms of tissue distribution, highly expressed in liver and placenta. Also expressed in peripheral blood, lung, kidney and brain. Detected at lower levels in colon. High expression is detected in brain and testis.

The protein resides in the endoplasmic reticulum membrane. It carries out the reaction a 2-acyl-sn-glycero-3-phosphoethanolamine + octadecanoyl-CoA = 1-octadecanoyl-2-acyl-sn-glycero-3-phosphoethanolamine + CoA. The enzyme catalyses 2-(9Z-octadecenoyl)-sn-glycero-3-phosphoethanolamine + octadecanoyl-CoA = 1-octadecanoyl-2-(9Z-octadecenoyl)-sn-glycero-3-phosphoethanolamine + CoA. It catalyses the reaction a 2-acyl-sn-glycero-3-phosphoethanolamine + hexadecanoyl-CoA = 1-hexadecanoyl-2-acyl-sn-glycero-3-phosphoethanolamine + CoA. The catalysed reaction is 2-(9Z-octadecenoyl)-sn-glycero-3-phosphoethanolamine + hexadecanoyl-CoA = 1-hexadecanoyl-2-(9Z-octadecenoyl)-sn-glycero-3-phosphoethanolamine + CoA. It carries out the reaction 1-tetradecanoyl-sn-glycero-3-phospho-(1'-sn-glycerol) + hexadecanoyl-CoA = 1-tetradecanoyl-2-hexadecanoyl-sn-glycero-3-phospho-(1'-sn-glycerol) + CoA. The enzyme catalyses 1-hexadecanoyl-sn-glycero-3-phospho-(1'-sn-glycerol) + dodecanoyl-CoA = 1-hexadecanoyl-2-dodecanoyl-sn-glycero-3-phospho-(1'-sn-glycerol) + CoA. It catalyses the reaction 1-hexadecanoyl-sn-glycero-3-phospho-(1'-sn-glycerol) + hexadecanoyl-CoA = 1,2-dihexadecanoyl-sn-glycero-3-phospho-(1'-sn-glycerol) + CoA. The catalysed reaction is 1-hexadecanoyl-sn-glycero-3-phospho-(1'-sn-glycerol) + octadecanoyl-CoA = 1-hexadecanoyl-2-octadecanoyl-sn-glycero-3-phospho-(1'-sn-glycerol) + CoA. It carries out the reaction 1-octadecanoyl-sn-glycero-3-phospho-(1'-sn-glycerol) + hexadecanoyl-CoA = 1-octadecanoyl-2-hexadecanoyl-sn-glycero-3-phospho-(1'-sn-glycerol) + CoA. The enzyme catalyses 1-(9Z-octadecenoyl)-sn-glycero-3-phospho-(1'-sn-glycerol) + dodecanoyl-CoA = 1-(9Z-octadecenoyl)-2-dodecanoyl-sn-glycero-3-phospho-(1'-sn-glycerol) + CoA. It catalyses the reaction 1-hexadecanoyl-sn-glycero-3-phospho-(1'-sn-glycerol) + (9Z)-octadecenoyl-CoA = 1-hexadecanoyl-2-(9Z-octadecenoyl)-sn-glycero-3-phospho-(1'-sn-glycerol) + CoA. The catalysed reaction is 1-(9Z-octadecenoyl)-sn-glycero-3-phospho-(1'-sn-glycerol) + hexadecanoyl-CoA = 1-(9Z-octadecenoyl)-2-hexadecanoyl-sn-glycero-3-phospho-(1'-sn-glycerol) + CoA. It carries out the reaction 1-(9Z-octadecenoyl)-sn-glycero-3-phospho-(1'-sn-glycerol) + (9Z)-octadecenoyl-CoA = 1,2-di-(9Z-octadecenoyl)-sn-glycero-3-phospho-(1'-sn-glycerol) + CoA. The enzyme catalyses a 2-acylglycerol + an acyl-CoA = a 1,2-diacylglycerol + CoA. It catalyses the reaction a 2-acylglycerol + hexadecanoyl-CoA = a 1-hexadecanoyl-2-acylglycerol + CoA. The catalysed reaction is a 1-acylglycerol + hexadecanoyl-CoA = an hexadecanoyl-acylglycerol + CoA. It carries out the reaction a 2-acyl-sn-glycero-3-phosphocholine + an acyl-CoA = a 1,2-diacyl-sn-glycero-3-phosphocholine + CoA. The enzyme catalyses 2-(9Z-octadecenoyl)-sn-glycero-3-phosphocholine + octadecanoyl-CoA = 1-octadecanoyl-2-(9Z-octadecenoyl)-sn-glycero-3-phosphocholine + CoA. It catalyses the reaction 2-(9Z,12Z-octadecadienoyl)-sn-glycero-3-phosphocholine + octadecanoyl-CoA = 1-octadecanoyl-2-(9Z,12Z)-octadecadienoyl-sn-glycero-3-phosphocholine + CoA. The catalysed reaction is 2-(5Z,8Z,11Z,14Z)-eicosatetraenoyl-sn-glycero-3-phosphocholine + octadecanoyl-CoA = 1-octadecanoyl-2-(5Z,8Z,11Z,14Z-eicosatetraenoyl)-sn-glycero-3-phosphocholine + CoA. It carries out the reaction 2-(9Z-octadecenoyl)-sn-glycero-3-phosphocholine + hexadecanoyl-CoA = 1-hexadecanoyl-2-(9Z-octadecenoyl)-sn-glycero-3-phosphocholine + CoA. The enzyme catalyses 2-(9Z-octadecenoyl)-sn-glycero-3-phospho-L-serine + hexadecanoyl-CoA = 1-hexadecanoyl-2-(9Z-octadecenoyl)-sn-glycero-3-phospho-L-serine + CoA. It catalyses the reaction 2-(4Z,7Z,10Z,13Z,16Z,19Z-docosahexaenoyl)-sn-glycero-3-phosphocholine + octadecanoyl-CoA = 1-octadecanoyl-2-(4Z,7Z,10Z,13Z,16Z,19Z-docosahexaenoyl)-sn-glycero-3-phosphocholine + CoA. The catalysed reaction is 1-(9Z-octadecenoyl)-sn-glycero-3-phospho-L-serine + octadecanoyl-CoA = 1-(9Z-octadecenoyl)-2-octadecanoyl-sn-glycero-3-phospho-L-serine + CoA. It carries out the reaction a 2-acyl-sn-glycero-3-phosphoethanolamine + a fatty acyl-CoA = a 1,2-diacyl-sn-glycero-3-phosphoethanolamine + CoA. Lysophospholipid acyltransferase involved in fatty acyl chain remodeling of glycerophospholipids in the endoplasmic reticulum membrane. Selectively catalyzes the transfer and esterification of saturated long-chain fatty acids from acyl-CoA to the sn-1 position of 1-lyso-2-acyl phosphatidylethanolamines (1-lyso-PE, LPE), with a preference for stearoyl CoA over palmitoyl CoA as acyl donor. Acts in concert with an unknown phospholipase A1 to convert palmitate phosphatidylethanolamine (PE) species into stearate ones. Provides substrates to the PE methylation pathway, controlling stearate/palmitate composition of PE and phosphatidylcholine (PC) species with an overall impact on de novo hepatic lipid synthesis, body fat content and life span. Can acylate lysophosphatidylglycerols (LPG) using various saturated fatty acyl-CoAs as acyl donors. Can also acylate monoacylglycerols with a preference for 2-monoacylglycerols over 1-monoacylglycerols. Has no activity toward lysophosphatidic acids (LPA). In Homo sapiens (Human), this protein is Acyl-CoA:lysophosphatidylglycerol acyltransferase 1.